We begin with the raw amino-acid sequence, 38 residues long: Photosystem II reaction center protein X (38 aa).

The chain crosses the membrane as a helical span at residues I9–I29.

The protein belongs to the PsbX family. Type 1 subfamily. As to quaternary structure, PSII is composed of 1 copy each of membrane proteins PsbA, PsbB, PsbC, PsbD, PsbE, PsbF, PsbH, PsbI, PsbJ, PsbK, PsbL, PsbM, PsbT, PsbX, PsbY, PsbZ, Psb30/Ycf12, at least 3 peripheral proteins of the oxygen-evolving complex and a large number of cofactors. It forms dimeric complexes.

It localises to the plastid. Its subcellular location is the chloroplast thylakoid membrane. Its function is as follows. Involved in the binding and/or turnover of quinones at the Q(B) site of photosystem II (PSII). PSII is a light-driven water plastoquinone oxidoreductase, using light energy to abstract electrons from H(2)O, generating a proton gradient subsequently used for ATP formation. The protein is Photosystem II reaction center protein X of Thalassiosira pseudonana (Marine diatom).